A 460-amino-acid polypeptide reads, in one-letter code: tRNA modification GTPase MnmE (460 aa).

Residues R22, E87, and R126 each coordinate (6S)-5-formyl-5,6,7,8-tetrahydrofolate. The 160-residue stretch at 222-381 (GLKTAIIGKP…LENTIYNLVF (160 aa)) folds into the TrmE-type G domain. N232 provides a ligand contact to K(+). GTP is bound by residues 232-237 (NVGKSS), 251-257 (TDIPGTT), and 276-279 (DTAG). A Mg(2+)-binding site is contributed by S236. The K(+) site is built by T251, I253, and T256. Residue T257 participates in Mg(2+) binding. A (6S)-5-formyl-5,6,7,8-tetrahydrofolate-binding site is contributed by K460.

Belongs to the TRAFAC class TrmE-Era-EngA-EngB-Septin-like GTPase superfamily. TrmE GTPase family. Homodimer. Heterotetramer of two MnmE and two MnmG subunits. The cofactor is K(+).

Its subcellular location is the cytoplasm. In terms of biological role, exhibits a very high intrinsic GTPase hydrolysis rate. Involved in the addition of a carboxymethylaminomethyl (cmnm) group at the wobble position (U34) of certain tRNAs, forming tRNA-cmnm(5)s(2)U34. The polypeptide is tRNA modification GTPase MnmE (Thermoanaerobacter sp. (strain X514)).